We begin with the raw amino-acid sequence, 145 residues long: 3-dehydroquinate dehydratase (145 aa).

Tyrosine 23 acts as the Proton acceptor in catalysis. Residues asparagine 75, histidine 81, and aspartate 88 each coordinate substrate. Histidine 101 (proton donor) is an active-site residue. Substrate is bound by residues isoleucine 102–serine 103 and arginine 112.

The protein belongs to the type-II 3-dehydroquinase family. Homododecamer.

The catalysed reaction is 3-dehydroquinate = 3-dehydroshikimate + H2O. It functions in the pathway metabolic intermediate biosynthesis; chorismate biosynthesis; chorismate from D-erythrose 4-phosphate and phosphoenolpyruvate: step 3/7. Its function is as follows. Catalyzes a trans-dehydration via an enolate intermediate. This is 3-dehydroquinate dehydratase from Caldicellulosiruptor bescii (strain ATCC BAA-1888 / DSM 6725 / KCTC 15123 / Z-1320) (Anaerocellum thermophilum).